Consider the following 274-residue polypeptide: Large ribosomal subunit protein uL2cz/uL2cy (274 aa).

Disordered stretches follow at residues 1–22 (MAIH…DSQV) and 225–274 (PVDH…RRSK).

This sequence belongs to the universal ribosomal protein uL2 family. In terms of assembly, part of the 50S ribosomal subunit.

Its subcellular location is the plastid. It localises to the chloroplast. This is Large ribosomal subunit protein uL2cz/uL2cy (rpl2-A) from Arabis hirsuta (Hairy rock-cress).